A 444-amino-acid polypeptide reads, in one-letter code: ATP-dependent RNA helicase sub2 (444 aa).

Residues 59-87 (TGFREFLLKPELLRAISWCGFEHPSEVQQ) carry the Q motif motif. The 176-residue stretch at 90–265 (IPQAILGTDV…KKFMQNPLEI (176 aa)) folds into the Helicase ATP-binding domain. 103-110 (AKSGLGKT) contacts ATP. The short motif at 212–215 (DECD) is the DECD box element. The Helicase C-terminal domain occupies 277–438 (GLQQYYIKLE…EYPEGGVDSA (162 aa)).

The protein belongs to the DEAD box helicase family. DECD subfamily.

It localises to the nucleus. The enzyme catalyses ATP + H2O = ADP + phosphate + H(+). Its function is as follows. ATP-binding RNA helicase involved in transcription elongation and required for the export of mRNA out of the nucleus. SUB2 also plays a role in pre-mRNA splicing and spliceosome assembly. May be involved in rDNA and telomeric silencing, and maintenance of genome integrity. This chain is ATP-dependent RNA helicase sub2 (sub2), found in Sclerotinia sclerotiorum (strain ATCC 18683 / 1980 / Ss-1) (White mold).